The sequence spans 476 residues: Glycogen synthase (476 aa).

Lysine 15 is a binding site for ADP-alpha-D-glucose.

Belongs to the glycosyltransferase 1 family. Bacterial/plant glycogen synthase subfamily.

It catalyses the reaction [(1-&gt;4)-alpha-D-glucosyl](n) + ADP-alpha-D-glucose = [(1-&gt;4)-alpha-D-glucosyl](n+1) + ADP + H(+). Its pathway is glycan biosynthesis; glycogen biosynthesis. Functionally, synthesizes alpha-1,4-glucan chains using ADP-glucose. In Bacillus anthracis, this protein is Glycogen synthase.